A 219-amino-acid polypeptide reads, in one-letter code: MEISTNPPSSSSSSVSSSIINGSLHHHIITRSDHYPTTFVQADSSSFKQVVQMLTGSSSPRSPDSPRPPTTPSGKGNFVIPPIKTAQPKKHSGNKLYERRSHGGFNNNLKNSLMINTLMIGGGGAGSPRFSPRNQEILSPSCLDFPKLALNSPVTPLKQGTNGNEGDPFDKMSPLSEEERGIADKGYYLHRSPISTPRDSEPQLLPLFPVTSPRLSPEM.

The VQ motif lies at Phe47 to Gly56. The interval Gln52 to Asn94 is disordered. A phosphoserine mark is found at Ser59, Ser65, Ser127, Ser131, Ser139, Ser141, and Ser152. Thr155 is subject to Phosphothreonine. 2 disordered regions span residues Pro156–Glu177 and His190–Met219. 2 positions are modified to phosphoserine: Ser192 and Ser195. Residues Thr196 and Thr211 each carry the phosphothreonine modification. Phosphoserine occurs at positions 212 and 216.

In terms of processing, phosphorylated on serine and threonine residues by MPK6.

The protein localises to the nucleus. Its function is as follows. May modulate WRKY transcription factor activities. This Arabidopsis thaliana (Mouse-ear cress) protein is VQ motif-containing protein 19.